We begin with the raw amino-acid sequence, 557 residues long: Multidrug transporter FLR1 (557 aa).

N-linked (GlcNAc...) asparagine glycosylation is found at Asn-33, Asn-48, and Asn-106. Over residues 44–57 the composition is skewed to low complexity; it reads SESSNMSFNSGSEE. The interval 44-67 is disordered; the sequence is SESSNMSFNSGSEENSQEKSVEDL. The next 8 helical transmembrane spans lie at 113-133, 149-169, 181-201, 204-224, 238-258, 271-291, 355-375, and 387-407; these read ALIIIQTMLLTCVNYMGSSIY, VVGTLNLSLYVLGYGLGPIVF, LPVYMITFFLFTMLQIGCALA, FAGLVILRFITGVLCSPALST, LALVLGLWSIGAVAAPVLAPL, WIFWLLFFCCCATMLLLTFFF, LYIALCYGAFYLFFEAFPIVF, and GLAYFGFCVGCIFAYIILLVF. Asn-418 carries an N-linked (GlcNAc...) asparagine glycan. Transmembrane regions (helical) follow at residues 426-446, 450-470, 484-506, and 521-541; these read TLILAMCIGWCIPLALFMFGW, VHWILPIISEVFFVLGCFNIF, YVASVFAGNGFARSSFAAAFPLF, and VAWGSSLVGFFTIGLWVIPFV.

This sequence belongs to the major facilitator superfamily.

The protein localises to the cell membrane. Functionally, multidrug transporter that confers resistance to 5-flucytosine (5-FC) and clotrimazole. Also confers resistance to benomyl, but not 4-nitroquinoline-N-oxide, cycloheximide, or fluconazole. Plays direct roles in extrusion of 5-flucytosine and clotrimazole. In Candida glabrata (strain ATCC 2001 / BCRC 20586 / JCM 3761 / NBRC 0622 / NRRL Y-65 / CBS 138) (Yeast), this protein is Multidrug transporter FLR1.